The primary structure comprises 80 residues: Styelin-C (80 aa).

A signal peptide spans 1–22; sequence MQMKATILIVLVALFMIQQSEA. Residue Trp24 is modified to 6'-bromotryptophan. Leu53 carries the post-translational modification Leucine amide. Residues 55–80 constitute a propeptide, removed in mature form; that stretch reads DMTDEEFQEFMQDIEQAREEELLSRQ.

The protein localises to the secreted. Bactericidal against several Gram-positive and Gram-negative bacteria. This is Styelin-C from Styela clava (Sea squirt).